The following is a 446-amino-acid chain: Glucose-6-phosphate isomerase (446 aa).

Glutamate 287 functions as the Proton donor in the catalytic mechanism. Catalysis depends on residues histidine 308 and lysine 422.

It belongs to the GPI family.

The protein resides in the cytoplasm. The enzyme catalyses alpha-D-glucose 6-phosphate = beta-D-fructose 6-phosphate. It functions in the pathway carbohydrate biosynthesis; gluconeogenesis. The protein operates within carbohydrate degradation; glycolysis; D-glyceraldehyde 3-phosphate and glycerone phosphate from D-glucose: step 2/4. Its function is as follows. Catalyzes the reversible isomerization of glucose-6-phosphate to fructose-6-phosphate. The sequence is that of Glucose-6-phosphate isomerase from Lactobacillus helveticus (strain DPC 4571).